Reading from the N-terminus, the 412-residue chain is Glutamate-1-semialdehyde 2,1-aminomutase (412 aa).

Lys260 bears the N6-(pyridoxal phosphate)lysine mark.

The protein belongs to the class-III pyridoxal-phosphate-dependent aminotransferase family. HemL subfamily. The cofactor is pyridoxal 5'-phosphate.

It localises to the cytoplasm. The enzyme catalyses (S)-4-amino-5-oxopentanoate = 5-aminolevulinate. Its pathway is porphyrin-containing compound metabolism; protoporphyrin-IX biosynthesis; 5-aminolevulinate from L-glutamyl-tRNA(Glu): step 2/2. This Methanocorpusculum labreanum (strain ATCC 43576 / DSM 4855 / Z) protein is Glutamate-1-semialdehyde 2,1-aminomutase.